We begin with the raw amino-acid sequence, 178 residues long: MEICRGPYSHLISLLLILLFRSESAGHPAGKRPCKMQAFRIWDTNQKTFYLRNNQLIAGYLQGPNTKLEEKIDMVPIDFRNVFLGIHGGKLCLSCVKSGDDTKLQLEEVNITDLNKNKEEDKRFTFIRSETGPTTSFESLACPGWFLCTTLEADHPVSLTNTPKEPCTVTKFYFQEDQ.

The N-terminal stretch at 1–26 is a signal peptide; that stretch reads MEICRGPYSHLISLLLILLFRSESAG. A disulfide bridge links cysteine 92 with cysteine 142. An N-linked (GlcNAc...) asparagine glycan is attached at asparagine 110.

The protein belongs to the IL-1 family.

It localises to the secreted. In terms of biological role, anti-inflammatory antagonist of interleukin-1 family of proinflammatory cytokines such as interleukin-1beta/IL1B and interleukin-1alpha/IL1A. Protects from immune dysregulation and uncontrolled systemic inflammation triggered by IL1 for a range of innate stimulatory agents such as pathogens. The polypeptide is Interleukin-1 receptor antagonist protein (Il1rn) (Rattus norvegicus (Rat)).